A 677-amino-acid chain; its full sequence is Probable potassium transport system protein Kup (677 aa).

12 helical membrane-spanning segments follow: residues 13-33, 54-74, 98-118, 137-157, 171-191, 217-237, 249-269, 296-316, 345-365, 374-394, 402-422, and 429-449; these read GALIAIGIVFGDIGTSPLYTM, VSLVFWTLMLITTIKYVIIAL, WLLLPALIGGAALLADGTLTP, FIFPNNQTIVLFVVTVILLIV, IFGPVMLTWFLFIGFFGLVNI, TGIFILGSVFLATTGAEALYS, VSWIFVYTMLILNYMGQGAWI, IFGVVMAALAAIIASQALISG, MYIGTVNWLLCIIGLIIVWAF, AYGLSITITMLMTTLLLYQFI, ILAFFFVVIFGMIETVFLIAS, and GGYATLIIMVAILSVMMIWFY.

Belongs to the HAK/KUP transporter (TC 2.A.72) family.

It is found in the cell membrane. It carries out the reaction K(+)(in) + H(+)(in) = K(+)(out) + H(+)(out). Functionally, transport of potassium into the cell. Likely operates as a K(+):H(+) symporter. This is Probable potassium transport system protein Kup from Leuconostoc mesenteroides subsp. mesenteroides (strain ATCC 8293 / DSM 20343 / BCRC 11652 / CCM 1803 / JCM 6124 / NCDO 523 / NBRC 100496 / NCIMB 8023 / NCTC 12954 / NRRL B-1118 / 37Y).